The following is a 133-amino-acid chain: Single-stranded DNA-binding protein 2 (133 aa).

Residues 1–103 form the SSB domain; it reads MNKTILIGRL…VVAEEVKFLE (103 aa).

Homotetramer.

In Clostridium acetobutylicum (strain ATCC 824 / DSM 792 / JCM 1419 / IAM 19013 / LMG 5710 / NBRC 13948 / NRRL B-527 / VKM B-1787 / 2291 / W), this protein is Single-stranded DNA-binding protein 2 (ssb2).